We begin with the raw amino-acid sequence, 891 residues long: uncharacterized protein (891 aa).

Positions 48–64 (GHKKPRSESRKKYDAKK) are enriched in basic and acidic residues. The disordered stretch occupies residues 48–86 (GHKKPRSESRKKYDAKKQHQSSHFATPVKGVESSEPTEK). Phosphoserine occurs at positions 261, 263, 265, and 268. Residues 795 to 822 (QRTFSNESPRAVDSGFSRTSTPFSESTS) form a disordered region. Polar residues predominate over residues 810–822 (FSRTSTPFSESTS).

The protein resides in the nucleus. This is an uncharacterized protein from Schizosaccharomyces pombe (strain 972 / ATCC 24843) (Fission yeast).